Reading from the N-terminus, the 431-residue chain is UDP-N-acetylglucosamine 1-carboxyvinyltransferase (431 aa).

25 to 26 (KN) contacts phosphoenolpyruvate. UDP-N-acetyl-alpha-D-glucosamine is bound at residue Arg101. Residue Cys125 is the Proton donor of the active site. Cys125 is modified (2-(S-cysteinyl)pyruvic acid O-phosphothioketal). The UDP-N-acetyl-alpha-D-glucosamine site is built by Asp317 and Ile339.

It belongs to the EPSP synthase family. MurA subfamily.

The protein localises to the cytoplasm. The enzyme catalyses phosphoenolpyruvate + UDP-N-acetyl-alpha-D-glucosamine = UDP-N-acetyl-3-O-(1-carboxyvinyl)-alpha-D-glucosamine + phosphate. The protein operates within cell wall biogenesis; peptidoglycan biosynthesis. Cell wall formation. Adds enolpyruvyl to UDP-N-acetylglucosamine. This is UDP-N-acetylglucosamine 1-carboxyvinyltransferase from Thermobifida fusca (strain YX).